We begin with the raw amino-acid sequence, 493 residues long: Glutamate--tRNA ligase (493 aa).

The 'HIGH' region motif lies at 9-19; sequence PSPTGFVHIGS. The short motif at 258-262 is the 'KMSKS' region element; sequence KLSKR. K261 provides a ligand contact to ATP.

The protein belongs to the class-I aminoacyl-tRNA synthetase family. Glutamate--tRNA ligase type 1 subfamily. In terms of assembly, monomer.

Its subcellular location is the cytoplasm. It carries out the reaction tRNA(Glu) + L-glutamate + ATP = L-glutamyl-tRNA(Glu) + AMP + diphosphate. In terms of biological role, catalyzes the attachment of glutamate to tRNA(Glu) in a two-step reaction: glutamate is first activated by ATP to form Glu-AMP and then transferred to the acceptor end of tRNA(Glu). This chain is Glutamate--tRNA ligase, found in Clostridioides difficile (strain 630) (Peptoclostridium difficile).